Here is a 605-residue protein sequence, read N- to C-terminus: Elongation factor 4 (605 aa).

The tr-type G domain occupies 10-192 (KNIRNFAIVA…AIVMRLPPPH (183 aa)). GTP contacts are provided by residues 22–27 (DHGKST) and 139–142 (NKVD).

The protein belongs to the TRAFAC class translation factor GTPase superfamily. Classic translation factor GTPase family. LepA subfamily.

The protein resides in the cell inner membrane. It catalyses the reaction GTP + H2O = GDP + phosphate + H(+). Required for accurate and efficient protein synthesis under certain stress conditions. May act as a fidelity factor of the translation reaction, by catalyzing a one-codon backward translocation of tRNAs on improperly translocated ribosomes. Back-translocation proceeds from a post-translocation (POST) complex to a pre-translocation (PRE) complex, thus giving elongation factor G a second chance to translocate the tRNAs correctly. Binds to ribosomes in a GTP-dependent manner. In Chelativorans sp. (strain BNC1), this protein is Elongation factor 4.